The sequence spans 317 residues: Ribose-phosphate pyrophosphokinase (317 aa).

ATP-binding positions include 41 to 43 and 100 to 101; these read DME and RQ. Mg(2+) contacts are provided by H134 and D174. K197 is a catalytic residue. D-ribose 5-phosphate contacts are provided by residues R199, D223, and 227–231; that span reads DSGGT.

It belongs to the ribose-phosphate pyrophosphokinase family. Class I subfamily. As to quaternary structure, homohexamer. Mg(2+) is required as a cofactor.

Its subcellular location is the cytoplasm. The catalysed reaction is D-ribose 5-phosphate + ATP = 5-phospho-alpha-D-ribose 1-diphosphate + AMP + H(+). Its pathway is metabolic intermediate biosynthesis; 5-phospho-alpha-D-ribose 1-diphosphate biosynthesis; 5-phospho-alpha-D-ribose 1-diphosphate from D-ribose 5-phosphate (route I): step 1/1. Involved in the biosynthesis of the central metabolite phospho-alpha-D-ribosyl-1-pyrophosphate (PRPP) via the transfer of pyrophosphoryl group from ATP to 1-hydroxyl of ribose-5-phosphate (Rib-5-P). The protein is Ribose-phosphate pyrophosphokinase of Bradyrhizobium diazoefficiens (strain JCM 10833 / BCRC 13528 / IAM 13628 / NBRC 14792 / USDA 110).